Reading from the N-terminus, the 618-residue chain is Membrane protein insertase YidC (618 aa).

The next 6 membrane-spanning stretches (helical) occupy residues Lys3–Ser23, Trp363–Phe383, Leu439–Ile459, Phe478–Leu498, Pro520–Leu540, and Ser545–Leu565.

This sequence belongs to the OXA1/ALB3/YidC family. Type 1 subfamily. As to quaternary structure, interacts with the Sec translocase complex via SecD. Specifically interacts with transmembrane segments of nascent integral membrane proteins during membrane integration.

The protein localises to the cell membrane. Functionally, required for the insertion and/or proper folding and/or complex formation of integral membrane proteins into the membrane. Involved in integration of membrane proteins that insert both dependently and independently of the Sec translocase complex, as well as at least some lipoproteins. Aids folding of multispanning membrane proteins. This chain is Membrane protein insertase YidC, found in Bacteroides fragilis (strain YCH46).